We begin with the raw amino-acid sequence, 381 residues long: Queuine tRNA-ribosyltransferase (381 aa).

Residue Asp-96 is the Proton acceptor of the active site. Substrate is bound by residues 96 to 100 (DSGGF), Asp-150, Gln-193, and Gly-220. The segment at 251-257 (GVGAPDS) is RNA binding. The Nucleophile role is filled by Asp-270. Residues 275 to 279 (TRIAR) are RNA binding; important for wobble base 34 recognition. Positions 308, 310, 313, and 339 each coordinate Zn(2+).

The protein belongs to the queuine tRNA-ribosyltransferase family. In terms of assembly, homodimer. Within each dimer, one monomer is responsible for RNA recognition and catalysis, while the other monomer binds to the replacement base PreQ1. It depends on Zn(2+) as a cofactor.

The catalysed reaction is 7-aminomethyl-7-carbaguanine + guanosine(34) in tRNA = 7-aminomethyl-7-carbaguanosine(34) in tRNA + guanine. Its pathway is tRNA modification; tRNA-queuosine biosynthesis. Its function is as follows. Catalyzes the base-exchange of a guanine (G) residue with the queuine precursor 7-aminomethyl-7-deazaguanine (PreQ1) at position 34 (anticodon wobble position) in tRNAs with GU(N) anticodons (tRNA-Asp, -Asn, -His and -Tyr). Catalysis occurs through a double-displacement mechanism. The nucleophile active site attacks the C1' of nucleotide 34 to detach the guanine base from the RNA, forming a covalent enzyme-RNA intermediate. The proton acceptor active site deprotonates the incoming PreQ1, allowing a nucleophilic attack on the C1' of the ribose to form the product. After dissociation, two additional enzymatic reactions on the tRNA convert PreQ1 to queuine (Q), resulting in the hypermodified nucleoside queuosine (7-(((4,5-cis-dihydroxy-2-cyclopenten-1-yl)amino)methyl)-7-deazaguanosine). This is Queuine tRNA-ribosyltransferase from Enterococcus faecalis (strain ATCC 700802 / V583).